Reading from the N-terminus, the 629-residue chain is Phosphomethylpyrimidine synthase (629 aa).

The disordered stretch occupies residues 1-24 (MSTKPKNAAHLSESAQVDSGSVQP). Residues 13–24 (ESAQVDSGSVQP) are compositionally biased toward polar residues. Residues asparagine 233, methionine 262, tyrosine 291, histidine 327, 347-349 (SRG), 388-391 (DGLR), and glutamate 427 each bind substrate. Histidine 431 is a Zn(2+) binding site. Tyrosine 454 provides a ligand contact to substrate. Histidine 495 is a binding site for Zn(2+). Cysteine 575, cysteine 578, and cysteine 583 together coordinate [4Fe-4S] cluster.

It belongs to the ThiC family. Homodimer. [4Fe-4S] cluster is required as a cofactor.

It carries out the reaction 5-amino-1-(5-phospho-beta-D-ribosyl)imidazole + S-adenosyl-L-methionine = 4-amino-2-methyl-5-(phosphooxymethyl)pyrimidine + CO + 5'-deoxyadenosine + formate + L-methionine + 3 H(+). It participates in cofactor biosynthesis; thiamine diphosphate biosynthesis. Catalyzes the synthesis of the hydroxymethylpyrimidine phosphate (HMP-P) moiety of thiamine from aminoimidazole ribotide (AIR) in a radical S-adenosyl-L-methionine (SAM)-dependent reaction. This chain is Phosphomethylpyrimidine synthase, found in Pseudomonas syringae pv. tomato (strain ATCC BAA-871 / DC3000).